The sequence spans 703 residues: Putative glycosyl hydrolase ecdE (703 aa).

A signal peptide spans 1–21 (MKLNIFASAILLCTSAFPVAA). Residue D47 is part of the active site. N-linked (GlcNAc...) asparagine glycans are attached at residues N104, N120, N293, N397, N443, and N641.

The protein belongs to the glycosyl hydrolase 32 family.

The polypeptide is Putative glycosyl hydrolase ecdE (Aspergillus rugulosus (Emericella rugulosa)).